A 502-amino-acid chain; its full sequence is Glycerol kinase (502 aa).

Thr-14 serves as a coordination point for ADP. ATP is bound by residues Thr-14, Thr-15, and Ser-16. Position 14 (Thr-14) interacts with sn-glycerol 3-phosphate. Arg-18 is a binding site for ADP. Arg-84, Glu-85, Tyr-136, and Asp-246 together coordinate sn-glycerol 3-phosphate. Arg-84, Glu-85, Tyr-136, Asp-246, and Gln-247 together coordinate glycerol. The ADP site is built by Thr-268 and Gly-311. 4 residues coordinate ATP: Thr-268, Gly-311, Gln-315, and Gly-412. The ADP site is built by Gly-412 and Asn-416.

This sequence belongs to the FGGY kinase family. As to quaternary structure, homotetramer and homodimer (in equilibrium). Heterodimer with EIIA-Glc. Binds 1 zinc ion per glycerol kinase EIIA-Glc dimer. The zinc ion is important for dimerization.

The catalysed reaction is glycerol + ATP = sn-glycerol 3-phosphate + ADP + H(+). The protein operates within polyol metabolism; glycerol degradation via glycerol kinase pathway; sn-glycerol 3-phosphate from glycerol: step 1/1. Its activity is regulated as follows. Activity of this regulatory enzyme is affected by several metabolites. Allosterically and non-competitively inhibited by fructose 1,6-bisphosphate (FBP) and unphosphorylated phosphocarrier protein EIIA-Glc (III-Glc), an integral component of the bacterial phosphotransferase (PTS) system. Functionally, key enzyme in the regulation of glycerol uptake and metabolism. Catalyzes the phosphorylation of glycerol to yield sn-glycerol 3-phosphate. This chain is Glycerol kinase, found in Shigella flexneri.